We begin with the raw amino-acid sequence, 620 residues long: Chaperone protein HtpG (620 aa).

Residues 1-339 (MAKHQFQTEI…SEDLPLNVSR (339 aa)) form an a; substrate-binding region. A b region spans residues 340-546 (ELLQENRILA…ASDPMAGMAA (207 aa)). Residues 547–620 (MFAQMGQEMP…RVASLATKAL (74 aa)) are c.

The protein belongs to the heat shock protein 90 family. As to quaternary structure, homodimer.

Its subcellular location is the cytoplasm. Molecular chaperone. Has ATPase activity. This chain is Chaperone protein HtpG, found in Sulfurovum sp. (strain NBC37-1).